A 428-amino-acid polypeptide reads, in one-letter code: Spliceosome RNA helicase DDX39B (428 aa).

Residues 1-19 (MAENDVDNELLDYEDDEVE) are compositionally biased toward acidic residues. The disordered stretch occupies residues 1–31 (MAENDVDNELLDYEDDEVETAAGGDGAEAPA). At alanine 2 the chain carries N-acetylalanine. The residue at position 36 (lysine 36) is an N6-acetyllysine; alternate. A Glycyl lysine isopeptide (Lys-Gly) (interchain with G-Cter in SUMO2); alternate cross-link involves residue lysine 36. Residues serine 38 and serine 41 each carry the phosphoserine modification. The short motif at 45 to 73 (SGFRDFLLKPELLRAIVDCGFEHPSEVQH) is the Q motif element. In terms of domain architecture, Helicase ATP-binding spans 76-249 (IPQAILGMDV…RKFMQDPMEI (174 aa)). 89–96 (AKSGMGKT) provides a ligand contact to ATP. A Phosphothreonine modification is found at threonine 172. Residues 196–199 (DECD) carry the DECD box motif. A Helicase C-terminal domain is found at 261–422 (GLQQYYVKLK…ELPDEIDISS (162 aa)).

The protein belongs to the DEAD box helicase family. DECD subfamily. As to quaternary structure, homodimer, and heterodimer with DDX39A. DDX39B interacts with the THO subcomplex to form the THO-DDX39B complex which multimerizes into a 28-subunit tetrameric assembly. Component of the transcription/export (TREX) complex at least composed of ALYREF/THOC4, DDX39B, SARNP/CIP29, CHTOP and the THO subcomplex; in the complex interacts with THOC2. THOC1-THOC2-THOC3-DDX39B subcomplex is sufficient for the interaction with export factor NXF1-NXT1. TREX seems to have a dynamic structure involving ATP-dependent remodeling. Within the TREX complex bridges ALYREF/THOC4 and the THO subcomplex, and, in a ATP-dependent manner, ALYREF/THOC4 and SARNP/CIP29. Component of the spliceosome. Interacts directly with U2AF2. Interacts with RBM8A, RNPS1 and SRRM1, FYTTD1/UIF, THOC1, MX1 and POLDIP3. Interacts with LUZP4. Interacts with SARNP/CIP29 (via the C-terminal domain); the interaction is direct and facilitates RNA binding of DDX39B.

It is found in the nucleus. The protein localises to the nucleus speckle. The protein resides in the cytoplasm. It catalyses the reaction ATP + H2O = ADP + phosphate + H(+). Involved in nuclear export of spliced and unspliced mRNA. Component of the TREX complex which is thought to couple mRNA transcription, processing and nuclear export, and specifically associates with spliced mRNA and not with unspliced pre-mRNA. The TREX complex is recruited to spliced mRNAs by a transcription-independent mechanism, binds to mRNA upstream of the exon-junction complex (EJC) and is recruited in a splicing- and cap-dependent manner to a region near the 5' end of the mRNA where it functions in mRNA export to the cytoplasm via the TAP/NXF1 pathway. The THOC1-THOC2-THOC3 core complex alone is sufficient to promote ATPase activity of DDX39B; in the complex THOC2 is the only component that directly interacts with DDX39B. Associates with SARNP/CIP29, which facilitates RNA binding of DDX39B and likely plays a role in mRNA export. May undergo several rounds of ATP hydrolysis during assembly of TREX to drive subsequent loading of components such as ALYREF/THOC4 and CHTOP onto mRNA. Also associates with pre-mRNA independent of ALYREF/THOC4. Involved in the nuclear export of intronless mRNA; the ATP-bound form is proposed to recruit export adapter ALYREF/THOC4 to intronless mRNA; its ATPase activity is cooperatively stimulated by RNA and ALYREF/THOC4 and ATP hydrolysis is thought to trigger the dissociation from RNA to allow the association of ALYREF/THOC4 and the NXF1-NXT1 heterodimer. Involved in transcription elongation and genome stability. Functionally, splice factor that is required for the first ATP-dependent step in spliceosome assembly and for the interaction of U2 snRNP with the branchpoint. Has both RNA-stimulated ATP binding/hydrolysis activity and ATP-dependent RNA unwinding activity. Even with the stimulation of RNA, the ATPase activity is weak. Can only hydrolyze ATP but not other NTPs. The RNA stimulation of ATPase activity does not have a strong preference for the sequence and length of the RNA. However, ssRNA stimulates the ATPase activity much more strongly than dsRNA. Can unwind 5' or 3' overhangs or blunt end RNA duplexes in vitro. The ATPase and helicase activities are not influenced by U2AF2; the effect of ALYREF/THOC4 is reported conflictingly. This Bos taurus (Bovine) protein is Spliceosome RNA helicase DDX39B (DDX39B).